Reading from the N-terminus, the 181-residue chain is uncharacterized protein (181 aa).

This sequence belongs to the M.jannaschii MJ0150/MJ0739/MJ0745/MJ1460/MJ1642 family.

This is an uncharacterized protein from Methanocaldococcus jannaschii (strain ATCC 43067 / DSM 2661 / JAL-1 / JCM 10045 / NBRC 100440) (Methanococcus jannaschii).